Here is a 76-residue protein sequence, read N- to C-terminus: Dermaseptin-SP2 (76 aa).

Positions 1-22 (MAFLKKSLFLVLFLGLVSLSIC) are cleaved as a signal peptide. Residues 23-45 (EEEKRENEDEEEQEDEEQSEEKR) constitute a propeptide that is removed on maturation. The tract at residues 24–44 (EEKRENEDEEEQEDEEQSEEK) is disordered. Acidic residues predominate over residues 30 to 41 (EDEEEQEDEEQS). A Glutamine amide modification is found at Q73. Residues 74-76 (GEQ) constitute a propeptide that is removed on maturation.

In terms of tissue distribution, expressed by the skin glands.

It is found in the secreted. The protein localises to the target cell membrane. Functionally, antimicrobial peptide with activity against Gram-positive and Gram-negative bacteria and fungi. Has been tested against E.coli (MIC=2.68-8 uM), S.aureus (ATCC 25923, MIC=2.68-8 uM), S.aureus (ATCC oxacillin resistant, MIC=2.68 uM), K.pneumoniae (MIC=10.71 uM) and C.albicans (MIC=10.71-32 uM). Probably acts by disturbing membrane functions with its alpha-helical amphipathic structure. May penetrate bacterial membranes, but stay at the mammalian membrane surface. Shows a very weak hemolytic activity. In Agalychnis spurrelli (Gliding leaf frog), this protein is Dermaseptin-SP2.